A 119-amino-acid polypeptide reads, in one-letter code: Small ribosomal subunit protein bS16 (119 aa).

This sequence belongs to the bacterial ribosomal protein bS16 family.

The polypeptide is Small ribosomal subunit protein bS16 (Chlamydia felis (strain Fe/C-56) (Chlamydophila felis)).